Here is a 368-residue protein sequence, read N- to C-terminus: tRNA 2-selenouridine synthase (368 aa).

Residues 15–138 (FLNQHPIMDV…MRQYLIGVIE (124 aa)) form the Rhodanese domain. Residue Cys98 is the S-selanylcysteine intermediate of the active site.

The protein belongs to the SelU family. Monomer.

The enzyme catalyses 5-methylaminomethyl-2-thiouridine(34) in tRNA + selenophosphate + (2E)-geranyl diphosphate + H2O + H(+) = 5-methylaminomethyl-2-selenouridine(34) in tRNA + (2E)-thiogeraniol + phosphate + diphosphate. It carries out the reaction 5-methylaminomethyl-2-thiouridine(34) in tRNA + (2E)-geranyl diphosphate = 5-methylaminomethyl-S-(2E)-geranyl-thiouridine(34) in tRNA + diphosphate. It catalyses the reaction 5-methylaminomethyl-S-(2E)-geranyl-thiouridine(34) in tRNA + selenophosphate + H(+) = 5-methylaminomethyl-2-(Se-phospho)selenouridine(34) in tRNA + (2E)-thiogeraniol. The catalysed reaction is 5-methylaminomethyl-2-(Se-phospho)selenouridine(34) in tRNA + H2O = 5-methylaminomethyl-2-selenouridine(34) in tRNA + phosphate. Functionally, involved in the post-transcriptional modification of the uridine at the wobble position (U34) of tRNA(Lys), tRNA(Glu) and tRNA(Gln). Catalyzes the conversion of 2-thiouridine (S2U-RNA) to 2-selenouridine (Se2U-RNA). Acts in a two-step process involving geranylation of 2-thiouridine (S2U) to S-geranyl-2-thiouridine (geS2U) and subsequent selenation of the latter derivative to 2-selenouridine (Se2U) in the tRNA chain. The protein is tRNA 2-selenouridine synthase of Shewanella baltica (strain OS185).